The sequence spans 394 residues: Sugar efflux transporter C (394 aa).

The Periplasmic portion of the chain corresponds to 1 to 10; the sequence is MQKTATTPSK. Residues 11–31 traverse the membrane as a helical segment; the sequence is ILDLTAAAFLLVAFLTGIAGA. At 32-49 the chain is on the cytoplasmic side; it reads LQTPTLSIFLADELKARP. A helical membrane pass occupies residues 50-70; that stretch reads IMVGFFFTGSAIMGILVSQFL. Residues 71-80 lie on the Periplasmic side of the membrane; it reads ARHSDKQGDR. Residues 81-101 form a helical membrane-spanning segment; the sequence is KLLILLCCLFGVLACTLFAWN. The Cytoplasmic segment spans residues 102–104; sequence RNY. The chain crosses the membrane as a helical span at residues 105 to 125; sequence FILLSTGVLLSSFASTANPQM. Topologically, residues 126 to 150 are periplasmic; that stretch reads FALAREHADRTGRETVMFSTFLRAQ. Residues 151–171 traverse the membrane as a helical segment; the sequence is ISLAWVIGPPLAYELAMGFSF. Lys172 is a topological domain (cytoplasmic). Residues 173-193 form a helical membrane-spanning segment; sequence VMYLTAAIAFVVCGLIVWLFL. The Periplasmic portion of the chain corresponds to 194 to 224; sequence PSIQRNIPVVTQPVEILPSTHRKRDTRLLFV. Residues 225–245 form a helical membrane-spanning segment; the sequence is VCSMMWAANNLYMINMPLFII. Over 246 to 253 the chain is Cytoplasmic; that stretch reads DELHLTDK. The helical transmembrane segment at 254–274 threads the bilayer; it reads LTGEMIGIAAGLEIPMMLIAG. At 275-283 the chain is on the periplasmic side; sequence YYMKRIGKR. A helical membrane pass occupies residues 284–304; the sequence is LLMLIAIVSGMCFYASVLMAT. Over 305-310 the chain is Cytoplasmic; sequence TPAVEL. The helical transmembrane segment at 311 to 331 threads the bilayer; sequence ELQILNAIFLGILCGIGMLYF. Residues 332–370 lie on the Periplasmic side of the membrane; it reads QDLMPEKIGSATTLYANTSRVGWIIAGSVDGIMVEIWSY. The helical transmembrane segment at 371 to 391 threads the bilayer; that stretch reads HALFWLAIGMLGIAMICLLFI. The Cytoplasmic segment spans residues 392 to 394; it reads KDI.

The protein belongs to the major facilitator superfamily. Set transporter family.

Its subcellular location is the cell inner membrane. Functionally, involved in the efflux of sugars. The physiological role may be the detoxification of non-metabolizable sugar analogs. This is Sugar efflux transporter C (setC) from Escherichia coli (strain K12).